Reading from the N-terminus, the 102-residue chain is ATP-dependent Clp protease adapter protein ClpS (102 aa).

The protein belongs to the ClpS family. In terms of assembly, binds to the N-terminal domain of the chaperone ClpA.

Functionally, involved in the modulation of the specificity of the ClpAP-mediated ATP-dependent protein degradation. This Shewanella halifaxensis (strain HAW-EB4) protein is ATP-dependent Clp protease adapter protein ClpS.